The chain runs to 364 residues: Dual-specificity RNA methyltransferase RlmN (364 aa).

Glu91 (proton acceptor) is an active-site residue. In terms of domain architecture, Radical SAM core spans 97-333; that stretch reads ESDRGTLCIS…VTVRKTRGDD (237 aa). Residues Cys104 and Cys338 are joined by a disulfide bond. [4Fe-4S] cluster-binding residues include Cys111, Cys115, and Cys118. S-adenosyl-L-methionine-binding positions include 164 to 165, Ser196, 218 to 220, and Asn295; these read GE and SLH. Cys338 serves as the catalytic S-methylcysteine intermediate.

The protein belongs to the radical SAM superfamily. RlmN family. [4Fe-4S] cluster serves as cofactor.

It localises to the cytoplasm. The enzyme catalyses adenosine(2503) in 23S rRNA + 2 reduced [2Fe-2S]-[ferredoxin] + 2 S-adenosyl-L-methionine = 2-methyladenosine(2503) in 23S rRNA + 5'-deoxyadenosine + L-methionine + 2 oxidized [2Fe-2S]-[ferredoxin] + S-adenosyl-L-homocysteine. The catalysed reaction is adenosine(37) in tRNA + 2 reduced [2Fe-2S]-[ferredoxin] + 2 S-adenosyl-L-methionine = 2-methyladenosine(37) in tRNA + 5'-deoxyadenosine + L-methionine + 2 oxidized [2Fe-2S]-[ferredoxin] + S-adenosyl-L-homocysteine. Functionally, specifically methylates position 2 of adenine 2503 in 23S rRNA and position 2 of adenine 37 in tRNAs. m2A2503 modification seems to play a crucial role in the proofreading step occurring at the peptidyl transferase center and thus would serve to optimize ribosomal fidelity. The sequence is that of Dual-specificity RNA methyltransferase RlmN from Neisseria meningitidis serogroup C / serotype 2a (strain ATCC 700532 / DSM 15464 / FAM18).